We begin with the raw amino-acid sequence, 332 residues long: UPF0194 membrane protein YbhG (332 aa).

The N-terminal stretch at 1–16 (MMKKPVVIGLAVVVLA) is a signal peptide. Positions 108–211 (EEIAQAAAAV…LQDSTLVAPS (104 aa)) form a coiled coil.

This sequence belongs to the UPF0194 family.

Its subcellular location is the periplasm. This chain is UPF0194 membrane protein YbhG, found in Escherichia coli O6:H1 (strain CFT073 / ATCC 700928 / UPEC).